A 258-amino-acid polypeptide reads, in one-letter code: Thiazole synthase 1 (258 aa).

Lys97 acts as the Schiff-base intermediate with DXP in catalysis. 1-deoxy-D-xylulose 5-phosphate-binding positions include Gly158, Ala184–Gly185, and Asn206–Thr207.

Belongs to the ThiG family. Homotetramer. Forms heterodimers with either ThiH or ThiS.

The protein localises to the cytoplasm. The catalysed reaction is [ThiS sulfur-carrier protein]-C-terminal-Gly-aminoethanethioate + 2-iminoacetate + 1-deoxy-D-xylulose 5-phosphate = [ThiS sulfur-carrier protein]-C-terminal Gly-Gly + 2-[(2R,5Z)-2-carboxy-4-methylthiazol-5(2H)-ylidene]ethyl phosphate + 2 H2O + H(+). The protein operates within cofactor biosynthesis; thiamine diphosphate biosynthesis. Functionally, catalyzes the rearrangement of 1-deoxy-D-xylulose 5-phosphate (DXP) to produce the thiazole phosphate moiety of thiamine. Sulfur is provided by the thiocarboxylate moiety of the carrier protein ThiS. In vitro, sulfur can be provided by H(2)S. This chain is Thiazole synthase 1, found in Syntrophotalea carbinolica (strain DSM 2380 / NBRC 103641 / GraBd1) (Pelobacter carbinolicus).